A 140-amino-acid polypeptide reads, in one-letter code: Gonadotropin subunit beta-2 (140 aa).

An N-terminal signal peptide occupies residues 1–23; the sequence is MGTPVKILVVLFSVIVLLAVAQS. 6 disulfides stabilise this stretch: C29/C77, C43/C92, C46/C130, C54/C108, C58/C110, and C113/C120. N33 carries N-linked (GlcNAc...) asparagine glycosylation.

Belongs to the glycoprotein hormones subunit beta family. As to quaternary structure, heterodimer of an alpha and a beta chain.

It is found in the secreted. In terms of biological role, involved in gametogenesis and steroidogenesis. The protein is Gonadotropin subunit beta-2 (cgbb) of Carassius auratus (Goldfish).